Consider the following 694-residue polypeptide: Elongation factor G (694 aa).

The tr-type G domain occupies 9 to 288 (DAIRNIGIMA…VIVKWLPSPL (280 aa)). Residues 18–25 (AHIDAGKT), 82–86 (DTPGH), and 136–139 (NKMD) contribute to the GTP site.

It belongs to the TRAFAC class translation factor GTPase superfamily. Classic translation factor GTPase family. EF-G/EF-2 subfamily.

It is found in the cytoplasm. Functionally, catalyzes the GTP-dependent ribosomal translocation step during translation elongation. During this step, the ribosome changes from the pre-translocational (PRE) to the post-translocational (POST) state as the newly formed A-site-bound peptidyl-tRNA and P-site-bound deacylated tRNA move to the P and E sites, respectively. Catalyzes the coordinated movement of the two tRNA molecules, the mRNA and conformational changes in the ribosome. This is Elongation factor G from Chlamydia trachomatis serovar L2b (strain UCH-1/proctitis).